The chain runs to 339 residues: Phenylalanine--tRNA ligase alpha subunit (339 aa).

Residue Glu-253 participates in Mg(2+) binding.

It belongs to the class-II aminoacyl-tRNA synthetase family. Phe-tRNA synthetase alpha subunit type 1 subfamily. As to quaternary structure, tetramer of two alpha and two beta subunits. The cofactor is Mg(2+).

The protein resides in the cytoplasm. It catalyses the reaction tRNA(Phe) + L-phenylalanine + ATP = L-phenylalanyl-tRNA(Phe) + AMP + diphosphate + H(+). The sequence is that of Phenylalanine--tRNA ligase alpha subunit from Ruthia magnifica subsp. Calyptogena magnifica.